A 305-amino-acid polypeptide reads, in one-letter code: Tyrosine recombinase XerC (305 aa).

In terms of domain architecture, Core-binding (CB) spans 4–95; it reads TSIQALINKW…AVKNFYRFLE (92 aa). Positions 116 to 298 constitute a Tyr recombinase domain; the sequence is LLPKALSEDD…SIKHLEAVYT (183 aa). Active-site residues include R159, K182, H250, R253, and H276. Y285 functions as the O-(3'-phospho-DNA)-tyrosine intermediate in the catalytic mechanism.

The protein belongs to the 'phage' integrase family. XerC subfamily. As to quaternary structure, forms a cyclic heterotetrameric complex composed of two molecules of XerC and two molecules of XerD.

Its subcellular location is the cytoplasm. Site-specific tyrosine recombinase, which acts by catalyzing the cutting and rejoining of the recombining DNA molecules. The XerC-XerD complex is essential to convert dimers of the bacterial chromosome into monomers to permit their segregation at cell division. It also contributes to the segregational stability of plasmids. This chain is Tyrosine recombinase XerC, found in Rickettsia rickettsii (strain Iowa).